A 283-amino-acid polypeptide reads, in one-letter code: Bifunctional protein FolD (283 aa).

NADP(+) contacts are provided by residues 165–167 (GAS) and Ser190.

Belongs to the tetrahydrofolate dehydrogenase/cyclohydrolase family. As to quaternary structure, homodimer.

It carries out the reaction (6R)-5,10-methylene-5,6,7,8-tetrahydrofolate + NADP(+) = (6R)-5,10-methenyltetrahydrofolate + NADPH. It catalyses the reaction (6R)-5,10-methenyltetrahydrofolate + H2O = (6R)-10-formyltetrahydrofolate + H(+). Its pathway is one-carbon metabolism; tetrahydrofolate interconversion. In terms of biological role, catalyzes the oxidation of 5,10-methylenetetrahydrofolate to 5,10-methenyltetrahydrofolate and then the hydrolysis of 5,10-methenyltetrahydrofolate to 10-formyltetrahydrofolate. This Cupriavidus pinatubonensis (strain JMP 134 / LMG 1197) (Cupriavidus necator (strain JMP 134)) protein is Bifunctional protein FolD.